The following is an 807-amino-acid chain: Glycerol-3-phosphate acyltransferase (807 aa).

An HXXXXD motif motif is present at residues cysteine 308–methionine 313.

This sequence belongs to the GPAT/DAPAT family.

The protein localises to the cell inner membrane. It catalyses the reaction sn-glycerol 3-phosphate + an acyl-CoA = a 1-acyl-sn-glycero-3-phosphate + CoA. Its pathway is phospholipid metabolism; CDP-diacylglycerol biosynthesis; CDP-diacylglycerol from sn-glycerol 3-phosphate: step 1/3. This chain is Glycerol-3-phosphate acyltransferase, found in Shewanella frigidimarina (strain NCIMB 400).